A 798-amino-acid chain; its full sequence is Iron-regulated transcriptional activator AFT2 (798 aa).

Disordered stretches follow at residues Arg-142–Lys-274, Tyr-331–Asn-365, Asn-449–Ser-545, Gln-642–Asn-718, and Gln-748–Trp-798. The segment covering Glu-153 to Pro-165 has biased composition (polar residues). Residues Ser-193–Leu-223 are compositionally biased toward low complexity. The span at Pro-256–Lys-274 shows a compositional bias: basic residues. Residues Asn-449–Asn-460 are compositionally biased toward polar residues. A compositionally biased stretch (low complexity) spans Glu-476–Asn-517. Polar residues-rich tracts occupy residues Asp-518–Pro-543 and Pro-646–Gln-656. Composition is skewed to low complexity over residues Leu-657–Pro-695 and Asn-705–Asn-718. Residues Gln-748–Ala-773 are compositionally biased toward polar residues. Positions Thr-774–Asn-789 are enriched in low complexity.

The protein localises to the nucleus. In terms of biological role, transcription factor involved in iron metabolism, oxidative stress, surface adhesion, hyphal development and virulence. Functions as a negative regulator of MRS4 expression through the CACCC AFT-type sequence in a gene dose-dependent fashion. Acts as a repressor in flocculation, plastic adhesion, and surface hydrophobicity. This Candida albicans (strain SC5314 / ATCC MYA-2876) (Yeast) protein is Iron-regulated transcriptional activator AFT2 (AFT2).